Consider the following 73-residue polypeptide: IGMVVECKDGYLVGNDGCKYSCSTRPGHYCASECSRVKGKDGYCYAWLACYCYNMPNWAPIWNSATNRCRGRK.

An N-terminal signal peptide occupies residues 1-7; that stretch reads IGMVVEC. Residues 8-70 enclose the LCN-type CS-alpha/beta domain; that stretch reads KDGYLVGNDG…IWNSATNRCR (63 aa). 4 disulfides stabilise this stretch: Cys-18–Cys-69, Cys-22–Cys-44, Cys-30–Cys-50, and Cys-34–Cys-52. Arg-70 carries the post-translational modification Arginine amide.

It belongs to the long (4 C-C) scorpion toxin superfamily. Sodium channel inhibitor family. Beta subfamily. In terms of tissue distribution, expressed by the venom gland.

The protein localises to the secreted. Functionally, beta toxins bind voltage-independently at site-4 of sodium channels (Nav) and shift the voltage of activation toward more negative potentials thereby affecting sodium channel activation and promoting spontaneous and repetitive firing. This Tityus discrepans (Venezuelan scorpion) protein is Toxin Td5.